Reading from the N-terminus, the 252-residue chain is GTP cyclohydrolase 1 type 2 homolog (252 aa).

5 residues coordinate a divalent metal cation: histidine 65, histidine 66, aspartate 103, histidine 220, and glutamate 224.

The protein belongs to the GTP cyclohydrolase I type 2/NIF3 family. Homohexamer.

This chain is GTP cyclohydrolase 1 type 2 homolog, found in Pseudomonas aeruginosa (strain ATCC 15692 / DSM 22644 / CIP 104116 / JCM 14847 / LMG 12228 / 1C / PRS 101 / PAO1).